Consider the following 1293-residue polypeptide: MKLLLLNILLLCCLADKLNEFSADIDYYDLGIMSRGKNAGSWYHSYEHQYDVFYYLAMQPWRHFVWTTCTTTDGNKECYKYTINEDHNVKVEDINKTDIKQDFCQKEYAYPIEKYEVDWDNVPVDEQRIESVDINGKTCFKYAAKRPLAYVYLNTKMTYATKTEAYDVCRMDFIGGRSITFRSFNTENKAFIDQYNTNTTSKCLLKVYDNNVNTHLAIIFGITDSTVIKSLQENLSLLSQLKTVKGVTLYYLKDDTYFTVNITLDQLKYDTLVKYTAGTGQVDPLINIAKNDLATKVADKSKDKNANDKIKRGTMIVLMDTALGSEFNAETEFDRKNISVHTVVLNRNKDPKITRSALRLVSLGPHYHEFTGNDEVNATITALFKGIRANLTERCDRDKCSGFCDAMNRCTCPMCCENDCFYTSCDVETGSCIPWPKAKPKAKKECPATCVGSYECKDLEGCVVTKYNDTCQPKVKCMVPYCDNDKNLTEVCKQKANCEADQKPSSDGYCWSYTCDQTTGFCKKDKRGKEMCTGKTNNCQEYVCDSEQRCSVRDKVCVKTSPYIEMSCYVAKCNLNTGMCENRLSCDTYSSCGGDSTGSVCKCDSTTGNKCQCNKVKNGNYCNSKNHEICDYTGTTPQCKVSNCTEDLVRDGCLIKRCNETSKTTYWENVDCSNTKIEFAKDDKSETMCKQYYSTTCLNGKCVVQAVGDVSNVGCGYCSMGTDNIITYHDDCNSRKSQCGNFNGKCIKGNDNSYSCVFEKDKTSSKSDNDICAECSSLTCPADTTYRTYTYDSKTGTCKATVQPTPACSVCESGKFVEKCKDQKLERKVTLEDGKEYKYNIPKDCVNEQCIPRTYIDCLGNDDNFKSIYNFYLPCQAYVTATYHYSSLFNLTSYKLHLPQSEEFMKEADKEAYCTYEITTRECKTCSLIETREKVQEVDLCAEETKNGGVPFKCKNNNCIIDPNFDCQPIECKIQEIVITEKDGIKTTTCKNTTKTTCDTNNKRIEDARKAFIEGKEGIEQVECASTVCQNDNSCPIITDVEKCNQNTEVDYGCKAMTGECDGTTYLCKFVQLTDDPSLDSEHFRTKSGVELNNACLKYKCVESKGSDGKITHKWEIDTERSNANPKPRNPCETATCNQTTGETIYTKKTCTVSEEFPTITPNQGRCFYCQCSYLDGSSVLTMYGETDKEYYDLDACGNCRVWNQTDRTQQLNNHTECILAGEINNVGAIAAATTVAVVVVAVVVALIVVSIGLFKTYQLVSSAMKNAITITNENAEYVGADNEATNAATFNG.

The first 15 residues, 1-15 (MKLLLLNILLLCCLA), serve as a signal peptide directing secretion. Topologically, residues 16 to 1234 (DKLNEFSADI…NNVGAIAAAT (1219 aa)) are extracellular. N-linked (GlcNAc...) asparagine glycosylation is found at asparagine 95, asparagine 198, asparagine 234, asparagine 261, asparagine 337, asparagine 377, asparagine 390, asparagine 468, asparagine 487, asparagine 643, asparagine 659, asparagine 890, asparagine 992, asparagine 1138, asparagine 1204, and asparagine 1214. A helical transmembrane segment spans residues 1235-1255 (TVAVVVVAVVVALIVVSIGLF). The Cytoplasmic portion of the chain corresponds to 1256-1293 (KTYQLVSSAMKNAITITNENAEYVGADNEATNAATFNG).

In terms of assembly, heterodimer composed of a 170 kDa heavy subunit (hgl) and a 31/35 kDa light subunit (lgl); disulfide-linked. In terms of processing, N-glycosylated.

The protein localises to the cell membrane. Its function is as follows. Lectin which binds galactose and N-acetyl-D-galactosamine of host glycoproteins and thus mediates adhesion to host cells. Mediates adherence to host colonic mucins, an essential step for pathogenic tissue invasion. This is Galactose/N-acetyl-D-galactosamine lectin heavy subunit 1 from Entamoeba histolytica (strain ATCC 30459 / HM-1:IMSS / ABRM).